A 157-amino-acid polypeptide reads, in one-letter code: MRIGMGYDVHKLCENRKLILGGIEIPYELGLLGHSDADVLIHAIMDSLLGAAALGDIGKHFPDTDNKYKGISSMLLLKEVGKLLNENSYEIINIDATIIAQKPKMAPYIKDMIKNIASALCINENQVNIKATTEEGLGFTGEGLGISSQSICLINEK.

Aspartate 8 and histidine 10 together coordinate a divalent metal cation. 4-CDP-2-C-methyl-D-erythritol 2-phosphate-binding positions include 8 to 10 (DVH) and 34 to 35 (HS). Residue histidine 42 participates in a divalent metal cation binding. Residues 56–58 (DIG), 61–65 (FPDTD), 100–106 (AQKPKMA), 132–135 (TTEE), and phenylalanine 139 contribute to the 4-CDP-2-C-methyl-D-erythritol 2-phosphate site.

It belongs to the IspF family. Homotrimer. It depends on a divalent metal cation as a cofactor.

The catalysed reaction is 4-CDP-2-C-methyl-D-erythritol 2-phosphate = 2-C-methyl-D-erythritol 2,4-cyclic diphosphate + CMP. Its pathway is isoprenoid biosynthesis; isopentenyl diphosphate biosynthesis via DXP pathway; isopentenyl diphosphate from 1-deoxy-D-xylulose 5-phosphate: step 4/6. Its function is as follows. Involved in the biosynthesis of isopentenyl diphosphate (IPP) and dimethylallyl diphosphate (DMAPP), two major building blocks of isoprenoid compounds. Catalyzes the conversion of 4-diphosphocytidyl-2-C-methyl-D-erythritol 2-phosphate (CDP-ME2P) to 2-C-methyl-D-erythritol 2,4-cyclodiphosphate (ME-CPP) with a corresponding release of cytidine 5-monophosphate (CMP). The chain is 2-C-methyl-D-erythritol 2,4-cyclodiphosphate synthase from Clostridium novyi (strain NT).